We begin with the raw amino-acid sequence, 332 residues long: NADH-quinone oxidoreductase subunit H (332 aa).

9 helical membrane passes run 4 to 24 (FAFF…IFAS), 44 to 64 (IGPD…MIKL), 78 to 98 (FIFA…LAAI), 120 to 140 (VALL…FLGG), 165 to 185 (VGAL…LVDI), 194 to 214 (FSWL…ALFI), 255 to 275 (IAGA…FWII), 279 to 299 (IMMI…RAAF), and 312 to 332 (YLIL…AVLL).

The protein belongs to the complex I subunit 1 family. NDH-1 is composed of 14 different subunits. Subunits NuoA, H, J, K, L, M, N constitute the membrane sector of the complex.

It localises to the cell inner membrane. It carries out the reaction a quinone + NADH + 5 H(+)(in) = a quinol + NAD(+) + 4 H(+)(out). Functionally, NDH-1 shuttles electrons from NADH, via FMN and iron-sulfur (Fe-S) centers, to quinones in the respiratory chain. The immediate electron acceptor for the enzyme in this species is believed to be ubiquinone. Couples the redox reaction to proton translocation (for every two electrons transferred, four hydrogen ions are translocated across the cytoplasmic membrane), and thus conserves the redox energy in a proton gradient. This subunit may bind ubiquinone. The polypeptide is NADH-quinone oxidoreductase subunit H (Campylobacter jejuni (strain RM1221)).